Here is a 527-residue protein sequence, read N- to C-terminus: Peptide chain release factor 3 (527 aa).

Positions 9–278 (NKRRTFAIIS…GLTQWAPKPQ (270 aa)) constitute a tr-type G domain. Residues 18–25 (SHPDAGKT), 86–90 (DTPGH), and 140–143 (NKLD) each bind GTP.

Belongs to the TRAFAC class translation factor GTPase superfamily. Classic translation factor GTPase family. PrfC subfamily.

It is found in the cytoplasm. In terms of biological role, increases the formation of ribosomal termination complexes and stimulates activities of RF-1 and RF-2. It binds guanine nucleotides and has strong preference for UGA stop codons. It may interact directly with the ribosome. The stimulation of RF-1 and RF-2 is significantly reduced by GTP and GDP, but not by GMP. This is Peptide chain release factor 3 from Haemophilus influenzae (strain PittEE).